A 147-amino-acid polypeptide reads, in one-letter code: Deoxyuridine 5'-triphosphate nucleotidohydrolase (147 aa).

Residues 67 to 69, Asn-80, and 84 to 86 each bind substrate; these read RSG and LID.

Belongs to the dUTPase family. Mg(2+) serves as cofactor.

The catalysed reaction is dUTP + H2O = dUMP + diphosphate + H(+). Its pathway is pyrimidine metabolism; dUMP biosynthesis; dUMP from dCTP (dUTP route): step 2/2. Functionally, this enzyme is involved in nucleotide metabolism: it produces dUMP, the immediate precursor of thymidine nucleotides and it decreases the intracellular concentration of dUTP so that uracil cannot be incorporated into DNA. In Dictyoglomus turgidum (strain DSM 6724 / Z-1310), this protein is Deoxyuridine 5'-triphosphate nucleotidohydrolase.